The sequence spans 541 residues: MTTVASLSLLPHLLIKPSFRCCSRKGVGRYGGIKVYAVLGDDGADYAKNNAWEALFHVDDPGPRVPIAKGKFLDVNQALEVVRFDIQYCDWRARQDLLTIMVLHNKVVEVLNPLAREFKSIGTLRKELAELQEELAKAHNQVHLSETRVSSALDKLAQMETLVNDRLLQDGGSSASTAECTSLAPSTSSASRVVNKKPPRRSLNVSGPVQPYNPSLKNFWYPVAFSSDLKDDTMVPIDCFEEQWVIFRGKDGRPGCVMNTCAHRACPLHLGSVNEGRIQCPYHGWEYSTDGKCEKMPSTKMLNVRIRSLPCFEQEGMVWIWPGNDPPKSTIPSLLPPSGFTIHAEIVMELPVEHGLLLDNLLDLAHAPFTHTSTFAKGWSVPSLVKFLTPSSGLQGYWDPYPIDMEFRPPCMVLSTIGISKPGKLEGKSTKQCSTHLHQLHICLPSSRNKTRLLYRMSLDFAPWIKHVPFMHILWSHFAEKVLNEDLRLVLGQQERMINGANVWNWPVSYDKLGIRYRLWRDAIERGVDRLPFSNQSESGS.

A coiled-coil region spans residues 114–151 (LAREFKSIGTLRKELAELQEELAKAHNQVHLSETRVSS). Residues 178–192 (AECTSLAPSTSSASR) show a composition bias toward polar residues. The tract at residues 178–208 (AECTSLAPSTSSASRVVNKKPPRRSLNVSGP) is disordered. The 101-residue stretch at 220–320 (WYPVAFSSDL…CFEQEGMVWI (101 aa)) folds into the Rieske domain. [2Fe-2S] cluster contacts are provided by C261, H263, C280, and H283. Fe cation contacts are provided by D359, D363, H366, and H371.

Expressed in leaves and germinating seedlings, but not in sheaths and roots.

It is found in the plastid. The protein localises to the chloroplast membrane. Its subcellular location is the chloroplast thylakoid membrane. The enzyme catalyses chlorophyllide a + 2 NADPH + 2 O2 + 2 H(+) = chlorophyllide b + 2 NADP(+) + 3 H2O. In terms of biological role, catalyzes a two-step oxygenase reaction involved in the synthesis of chlorophyll b. Acts specifically on the non-esterified chlorophyllide a and not on chlorophyll a. In Oryza sativa subsp. japonica (Rice), this protein is Chlorophyllide a oxygenase, chloroplastic (CAO).